Reading from the N-terminus, the 320-residue chain is o-succinylbenzoate synthase (320 aa).

The active-site Proton donor is the lysine 133. Mg(2+)-binding residues include aspartate 161, glutamate 190, and aspartate 213. Lysine 235 serves as the catalytic Proton acceptor.

This sequence belongs to the mandelate racemase/muconate lactonizing enzyme family. MenC type 1 subfamily. It depends on a divalent metal cation as a cofactor.

It carries out the reaction (1R,6R)-6-hydroxy-2-succinyl-cyclohexa-2,4-diene-1-carboxylate = 2-succinylbenzoate + H2O. Its pathway is quinol/quinone metabolism; 1,4-dihydroxy-2-naphthoate biosynthesis; 1,4-dihydroxy-2-naphthoate from chorismate: step 4/7. It functions in the pathway quinol/quinone metabolism; menaquinone biosynthesis. In terms of biological role, converts 2-succinyl-6-hydroxy-2,4-cyclohexadiene-1-carboxylate (SHCHC) to 2-succinylbenzoate (OSB). The sequence is that of o-succinylbenzoate synthase from Shigella sonnei (strain Ss046).